Consider the following 137-residue polypeptide: 15 kDa protein A (137 aa).

An N-terminal signal peptide occupies residues 1–20; sequence MAGVWKVLVVLVGLAVVACA. 2 cysteine pairs are disulfide-bonded: Cys-77–Cys-88 and Cys-99–Cys-116.

It belongs to the cathelicidin family. As to expression, large granules of neutrophils.

Its subcellular location is the secreted. Functionally, binds to bacterial lipopolysaccharides (LPS), potentiates strongly the early antibacterial effects of BPI. Inhibits the late lethal action of BPI. This chain is 15 kDa protein A, found in Oryctolagus cuniculus (Rabbit).